A 457-amino-acid polypeptide reads, in one-letter code: MGSPKKNENKGFFAAMTSGFSMFGTAVSRSVNGVQGNEGVEVINPEGGKEDAEEEAQKGRWKDEERDSYWKMMQKYIGSDITSMVTLPVVIFEPMTMLQKMAEIMEYSHLLDQADECEDPYLRLVYASSWAISVYYAFQRTWKPFNPILGETYEMVNHGGISFISEQVSHHPPMSAGHAENEHFIYDITSKLKTKLLGNSVDVYPVGRTRVTLKKDGVVLDLVPPLTKIHNLIFGRTWVDSPGEMVMTNLTTGDKVVLYFQPCGWFGSGRYEVDGYVYSAAEEPKIMMTGKWNEKMSYQPCDAEGEPLPGTELKEVWHLADVPKNDNFQYTHFAHKINSFDTAPAKLLASDSRIRPDRYSLEQGDLSKAGSEKHSLEERQRAEKRTRETKGQKFTPRWFDLTDEITPTPWGDIEVYQYNGKYNEHRDTAESSSSASNETDLKSIEFNPWQYGNISTE.

2 disordered regions span residues 37 to 61 and 363 to 393; these read NEGV…KGRW and QGDL…KGQK. Basic and acidic residues-rich tracts occupy residues 47 to 61 and 370 to 391; these read GGKE…KGRW and GSEK…ETKG.

The protein belongs to the OSBP family. Expressed in roots, leaves, stems and flowers.

Functionally, may be involved in the transport of sterols. This Arabidopsis thaliana (Mouse-ear cress) protein is Oxysterol-binding protein-related protein 3C (ORP3C).